Reading from the N-terminus, the 1488-residue chain is Chromosome partition protein MukB (1488 aa).

34–41 (GGNGAGKS) serves as a coordination point for ATP. 3 coiled-coil regions span residues 326–418 (LEAD…QYNQ), 444–472 (LDTF…QTAH), and 509–602 (RHLA…QRAP). The tract at residues 666 to 783 (PGGAEDQRLN…SLPIFGRAAR (118 aa)) is flexible hinge. Coiled coils occupy residues 835-923 (EAEI…AKLE), 977-1116 (EMLS…AKAG), and 1209-1265 (VEAI…LQSV). Residues 1049-1074 (ADSGAEERARQRRDELHAQLSNNRSR) are disordered. The segment covering 1051 to 1065 (SGAEERARQRRDELH) has biased composition (basic and acidic residues).

The protein belongs to the SMC family. MukB subfamily. Homodimerization via its hinge domain. Binds to DNA via its C-terminal region. Interacts, and probably forms a ternary complex, with MukE and MukF via its C-terminal region. The complex formation is stimulated by calcium or magnesium. Interacts with tubulin-related protein FtsZ.

Its subcellular location is the cytoplasm. It localises to the nucleoid. In terms of biological role, plays a central role in chromosome condensation, segregation and cell cycle progression. Functions as a homodimer, which is essential for chromosome partition. Involved in negative DNA supercoiling in vivo, and by this means organize and compact chromosomes. May achieve or facilitate chromosome segregation by condensation DNA from both sides of a centrally located replisome during cell division. This chain is Chromosome partition protein MukB, found in Salmonella enteritidis PT4 (strain P125109).